The following is a 362-amino-acid chain: Probable dual-specificity RNA methyltransferase RlmN (362 aa).

Catalysis depends on glutamate 105, which acts as the Proton acceptor. In terms of domain architecture, Radical SAM core spans histidine 111 to aspartate 344. A disulfide bridge links cysteine 118 with cysteine 349. Positions 125, 129, and 132 each coordinate [4Fe-4S] cluster. S-adenosyl-L-methionine contacts are provided by residues glycine 175–glutamate 176, serine 207, serine 230–histidine 232, and asparagine 306. Residue cysteine 349 is the S-methylcysteine intermediate of the active site.

This sequence belongs to the radical SAM superfamily. RlmN family. Requires [4Fe-4S] cluster as cofactor.

It localises to the cytoplasm. It carries out the reaction adenosine(2503) in 23S rRNA + 2 reduced [2Fe-2S]-[ferredoxin] + 2 S-adenosyl-L-methionine = 2-methyladenosine(2503) in 23S rRNA + 5'-deoxyadenosine + L-methionine + 2 oxidized [2Fe-2S]-[ferredoxin] + S-adenosyl-L-homocysteine. The enzyme catalyses adenosine(37) in tRNA + 2 reduced [2Fe-2S]-[ferredoxin] + 2 S-adenosyl-L-methionine = 2-methyladenosine(37) in tRNA + 5'-deoxyadenosine + L-methionine + 2 oxidized [2Fe-2S]-[ferredoxin] + S-adenosyl-L-homocysteine. Functionally, specifically methylates position 2 of adenine 2503 in 23S rRNA and position 2 of adenine 37 in tRNAs. The sequence is that of Probable dual-specificity RNA methyltransferase RlmN from Bacillus cereus (strain B4264).